The chain runs to 54 residues: Anti-adapter protein SpxO (54 aa).

Interacts with SpxH.

Its function is as follows. Inhibitor of Spx proteolytic control. Acts by interacting with SpxH/YjbH, which disrupts interaction between SpxH and Spx, and inhibits SpxH-enhanced proteolysis of Spx by ClpXP. Required for the stabilization of Spx and activation of Spx-regulated genes in response to cell wall stress. The protein is Anti-adapter protein SpxO of Bacillus subtilis (strain 168).